A 187-amino-acid polypeptide reads, in one-letter code: Large ribosomal subunit protein eL18x (187 aa).

Residues 150–187 are disordered; that stretch reads HFGPAPGVPHSNTKPYVRHKGRKFEKARGKRKSRGFKV. Residues 165–187 are compositionally biased toward basic residues; that stretch reads YVRHKGRKFEKARGKRKSRGFKV.

The protein belongs to the eukaryotic ribosomal protein eL18 family.

In Arabidopsis thaliana (Mouse-ear cress), this protein is Large ribosomal subunit protein eL18x (RPL18C).